The sequence spans 260 residues: MMMGFAVSDELLGTVAPIVVYWLYSGIYVALSSLESYRLHSKVEEEEKNLVSKSSVVKGVLVQQVVQAVVAILLFTVTGSDAEADKAQQFSFLVLARQFVTAMIVLDTWQYFMHRYMHQNKFLYKHIHSQHHRLIVPYAYGALYNHPVEGLLLDTIGGALSFLVSGMSPRTSIFFFSFATIKTVDDHCGLWLPGNLFHMVFKNNSAYHDIHHQLYGTKYNFSQPFFVMWDRILGTYMPYSLEKREDGGFEARPTKEFKDD.

3 helical membrane passes run 11–31 (LLGT…YVAL), 55–75 (SVVK…ILLF), and 92–112 (FLVL…WQYF). Residues 99 to 235 (FVTAMIVLDT…FVMWDRILGT (137 aa)) form the Fatty acid hydroxylase domain. The Histidine box-1 motif lies at 114-118 (HRYMH). The short motif at 128–132 (HSQHH) is the Histidine box-2 element. The Histidine box-3 motif lies at 207-213 (YHDIHHQ).

This sequence belongs to the sterol desaturase family. The cofactor is Fe cation. In terms of tissue distribution, ubiquitous, with higher levels in flowers and roots.

Its subcellular location is the endoplasmic reticulum membrane. It catalyses the reaction a dihydroceramide + 2 Fe(II)-[cytochrome b5] + O2 + 2 H(+) = a phytoceramide + 2 Fe(III)-[cytochrome b5] + H2O. It functions in the pathway membrane lipid metabolism; sphingolipid biosynthesis. Its function is as follows. Involved in sphingolipid trihydroxy long-chain base (4-hydroxysphinganine) biosynthesis. Can use C18- and C20-sphinganine as substrates to produce C18- and C20-phytosphinganines (D-ribo-2-amino-1,3,4-trihydroxyoctadecane and -eicosane). This Arabidopsis thaliana (Mouse-ear cress) protein is Sphinganine C4-monooxygenase 1 (SBH1).